A 498-amino-acid polypeptide reads, in one-letter code: MRILNYTIINLVMSKHLLLNINKTQKGIIHIIGIGGIGMSAIAEILHNSNCKVQGSDAQSNDNINKLQKLGIEVFIGHNANNISQAQIVVHSSAIEFDNVELIAAKNNNKTVLHRSDILAEIMKGKYVIAVSGSSGKTTTTAMIASIFDHSGIDATVTVGGILNSYKSNFKLGGSDTFLIEADESDGTMLKIPAKIAVITSINNDHIDYYGTFDNIKNAFSQFVNNAGSAVLPDSVDIDYDAGNSITFGFENGSIRASNIKQHANSIEFDVLNNWIPALRAGMTKGKCTEMSSQCVTLGSSPLKNIVLSNAIGIHKVSNALAAISVAIKLGISDADIKKGLLEFQGVARRFSLIADIKGVKLIEDYAHHPNEIYATLTAARSITKGKVIGIIEPLRFARIRNFFDEFIRIFMMFDYVILTPVHPPEDKPIPGCGIDDIQKALISNGFNNTKIMNDALLISHFISDSTSPSNIVLFIGAGSNIAKLAKETAALIAEVKV.

133-139 (GSSGKTT) is a binding site for ATP.

The protein belongs to the MurCDEF family.

Its subcellular location is the cytoplasm. It carries out the reaction UDP-N-acetyl-alpha-D-muramate + L-alanine + ATP = UDP-N-acetyl-alpha-D-muramoyl-L-alanine + ADP + phosphate + H(+). It participates in cell wall biogenesis; peptidoglycan biosynthesis. Its function is as follows. Cell wall formation. The sequence is that of UDP-N-acetylmuramate--L-alanine ligase from Wolbachia pipientis wMel.